The primary structure comprises 331 residues: MSMTTRAWEELDGGLGSCQALEDHSALAETQEDRASATPRLADSGSVPHDSQVAEGPSVDTRPKKMEKEPAARGTPGTGKERLKAGASPRSVPARKKAQTAPPLQPPPPPPALSEELPWGDLSLNKCLVLASLVALLGSAFQLCRDAVPGEAALQARVPEPWVPPSSAPREPSSPLPKFEAQAPPSAPPAPRAEAEVRPKIPGSREAAENDEEEPGEATGEAVREDRVTLADRGPKERPRREGKPRKEKPRKEERPKKERPRKEERPRAAREPREALPQRWESREGGHRPWARDSRDAEPRKKQAWVSPRRPDEEQRPGSRQKLRAGKGRD.

Disordered regions lie at residues 1 to 118 (MSMT…EELP) and 157 to 331 (RVPE…KGRD). A mediates interaction with CACNA1S region spans residues 3 to 76 (MTTRAWEELD…EKEPAARGTP (74 aa)). Composition is skewed to basic and acidic residues over residues 21–35 (LEDH…EDRA) and 61–71 (TRPKKMEKEPA). Pro residues-rich tracts occupy residues 103-112 (PLQPPPPPPA) and 161-175 (PWVP…PSSP). Basic and acidic residues-rich tracts occupy residues 222–242 (AVRE…PRRE) and 250–302 (PRKE…EPRK). The segment covering 320 to 331 (SRQKLRAGKGRD) has biased composition (basic residues).

Interacts with CACNA1S, CACNB1 and calsequestrin.

It localises to the sarcoplasmic reticulum membrane. It is found in the endoplasmic reticulum membrane. In terms of biological role, involved in skeletal muscle excitation/contraction coupling (EC), probably acting as a regulator of the voltage-sensitive calcium channel CACNA1S. EC is a physiological process whereby an electrical signal (depolarization of the plasma membrane) is converted into a chemical signal, a calcium gradient, by the opening of ryanodine receptor calcium release channels. May regulate CACNA1S membrane targeting and activity. The chain is Junctional sarcoplasmic reticulum protein 1 (JSRP1) from Homo sapiens (Human).